The chain runs to 416 residues: Probable glucan 1,3-beta-glucosidase A (416 aa).

An N-terminal signal peptide occupies residues 1–21 (MLYNLSKAVLALSVLAASADA). Glu-209 serves as the catalytic Proton donor. Intrachain disulfides connect Cys-290-Cys-415 and Cys-316-Cys-341. Catalysis depends on Glu-308, which acts as the Nucleophile.

It belongs to the glycosyl hydrolase 5 (cellulase A) family. As to quaternary structure, monomer. It depends on Mn(2+) as a cofactor.

Its subcellular location is the secreted. It carries out the reaction Successive hydrolysis of beta-D-glucose units from the non-reducing ends of (1-&gt;3)-beta-D-glucans, releasing alpha-glucose.. In terms of biological role, beta-glucanases participate in the metabolism of beta-glucan, the main structural component of the cell wall. It could also function biosynthetically as a transglycosylase. In Aspergillus terreus (strain NIH 2624 / FGSC A1156), this protein is Probable glucan 1,3-beta-glucosidase A (exgA).